Reading from the N-terminus, the 348-residue chain is Uroporphyrinogen decarboxylase (348 aa).

Substrate contacts are provided by residues 27-31, Phe46, Asp76, Tyr152, Ser207, and His320; that span reads RQAGR.

It belongs to the uroporphyrinogen decarboxylase family. Homodimer.

It localises to the cytoplasm. The enzyme catalyses uroporphyrinogen III + 4 H(+) = coproporphyrinogen III + 4 CO2. It functions in the pathway porphyrin-containing compound metabolism; protoporphyrin-IX biosynthesis; coproporphyrinogen-III from 5-aminolevulinate: step 4/4. Catalyzes the decarboxylation of four acetate groups of uroporphyrinogen-III to yield coproporphyrinogen-III. This is Uroporphyrinogen decarboxylase from Bacillus cytotoxicus (strain DSM 22905 / CIP 110041 / 391-98 / NVH 391-98).